A 417-amino-acid polypeptide reads, in one-letter code: MPIQLGLQRMLQLLKHLGNPQESFCAVQIAGTNGKGSICSYIYTSLLQAAIKTGRYTSPHFLEPRDTISINGQIASEEIFNTCWKQVIEVDRRFRTKATEFELLTATAFQCFHHSGVRVAVIETGMGGRLDATNVFEEPVLSIISRICLDHQAFLGNTLEAIAKEKAGIFKKNVPCVVDGLNEVNVLNQLKLSAEETRAHPFYLAKGKSGENKNEWIINTPNWGTNTFSTPLKGDYQGQNLACAVTALDILSSSFSIMLPHVQNGVKNTSWPGRLDIRSVPSLGDILFDGAHNKEAAIELAKFVNSQRREHNKSVSWVVAFTNTKDVTGIMKILLRKGDTVIATNFSSVSGMPWIKSMEPEVIKNSISSESSVECYTADNLTISEILRLAKEKNSSVIVCGSLYLLGDMYRYLKLDV.

Residue 34–37 participates in ATP binding; it reads GKGS. S58, E123, and H151 together coordinate Mg(2+). 2 residues coordinate ATP: R274 and D289.

This sequence belongs to the folylpolyglutamate synthase family.

The enzyme catalyses 7,8-dihydropteroate + L-glutamate + ATP = 7,8-dihydrofolate + ADP + phosphate + H(+). It participates in cofactor biosynthesis; tetrahydrofolylpolyglutamate biosynthesis. In terms of biological role, glutamate-adding enzyme which catalyzes the binding of the first glutamyl side chain to dihydropteroate. Leads to the de nove synthesis of tetrahydrofolate. de novo. In Schizosaccharomyces pombe (strain 972 / ATCC 24843) (Fission yeast), this protein is Probable dihydrofolate synthetase (fol3).